Reading from the N-terminus, the 594-residue chain is UvrABC system protein C (594 aa).

Positions 14-91 constitute a GIY-YIG domain; that stretch reads DSPGCYLHKD…IQENMPKYNI (78 aa). In terms of domain architecture, UVR spans 196 to 231; sequence DKIIDDLRSKMLEASNKQEFERAAEYRDLISGIATM.

It belongs to the UvrC family. In terms of assembly, interacts with UvrB in an incision complex.

It localises to the cytoplasm. The UvrABC repair system catalyzes the recognition and processing of DNA lesions. UvrC both incises the 5' and 3' sides of the lesion. The N-terminal half is responsible for the 3' incision and the C-terminal half is responsible for the 5' incision. In Streptococcus equi subsp. zooepidemicus (strain MGCS10565), this protein is UvrABC system protein C.